The chain runs to 548 residues: Splicing factor U2af large subunit B (548 aa).

The span at 1-82 shows a compositional bias: basic and acidic residues; sequence MADDHAAAAD…DRDRDRDKDR (82 aa). The segment at 1–156 is disordered; that stretch reads MADDHAAAAD…SKRVSGFDMA (156 aa). Basic residues predominate over residues 83–93; the sequence is DRHHRHHRERR. Basic and acidic residues predominate over residues 94 to 120; it reads EHRDRSDDHDRHRSRDSERRRDHERDG. Residues 121-149 show a composition bias toward basic residues; that stretch reads RRRHRSRSRSRSRGRDRRSRSRSRSKSKR. 3 RRM domains span residues 214 to 297, 334 to 412, and 453 to 539; these read RRVY…RPTD, DRIF…RANQ, and QVVS…YPEN.

It belongs to the splicing factor SR family.

The protein resides in the nucleus. Its function is as follows. Necessary for the splicing of pre-mRNA. In Oryza sativa subsp. japonica (Rice), this protein is Splicing factor U2af large subunit B (U2AF65B).